Consider the following 142-residue polypeptide: Large ribosomal subunit protein uL13 (142 aa).

This sequence belongs to the universal ribosomal protein uL13 family. In terms of assembly, part of the 50S ribosomal subunit.

This protein is one of the early assembly proteins of the 50S ribosomal subunit, although it is not seen to bind rRNA by itself. It is important during the early stages of 50S assembly. The polypeptide is Large ribosomal subunit protein uL13 (Haemophilus influenzae (strain 86-028NP)).